We begin with the raw amino-acid sequence, 197 residues long: Small ribosomal subunit protein uS5 (197 aa).

Positions methionine 1–serine 27 are disordered. An S5 DRBM domain is found at phenylalanine 29–valine 92.

This sequence belongs to the universal ribosomal protein uS5 family. Part of the 30S ribosomal subunit. Contacts proteins S4 and S8.

In terms of biological role, with S4 and S12 plays an important role in translational accuracy. Functionally, located at the back of the 30S subunit body where it stabilizes the conformation of the head with respect to the body. In Bradyrhizobium diazoefficiens (strain JCM 10833 / BCRC 13528 / IAM 13628 / NBRC 14792 / USDA 110), this protein is Small ribosomal subunit protein uS5.